A 980-amino-acid chain; its full sequence is NACHT, LRR and PYD domains-containing protein 7 (980 aa).

The Pyrin domain occupies 1 to 93; it reads MTSPQLEWTL…CKMAKAEMME (93 aa). The segment at 104 to 123 is disordered; that stretch reads ELGDAEEDSELAKPGEKEGW. Over residues 113–123 the composition is skewed to basic and acidic residues; the sequence is ELAKPGEKEGW. One can recognise an NACHT domain in the interval 172 to 491; it reads YTVVLHGPAG…LEKEEGEDRD (320 aa). 178–185 provides a ligand contact to ATP; the sequence is GPAGVGKT. LRR repeat units follow at residues 614–638, 674–697, 760–784, 788–810, 817–840, 845–868, 874–897, 902–928, and 933–957; these read CQDL…DFEL, NSNL…ILCD, KCNL…FFYV, NQSL…MLLY, KHFL…DLAA, SKKL…FLCE, DCKL…YLSE, ACSL…ALEN, and LKHL…VKEK.

This sequence belongs to the NLRP family. In terms of assembly, directly interacts with CASP1 and IL1B. As to expression, expressed in numerous tissues including uterus and ovary, with low levels in heart and brain. Not detected in skeletal muscle.

Inhibits CASP1/caspase-1-dependent IL1B secretion. In Homo sapiens (Human), this protein is NACHT, LRR and PYD domains-containing protein 7 (NLRP7).